A 306-amino-acid polypeptide reads, in one-letter code: MIFQRTVQKMVKATGVGLHSGNKVTLSIMPAPVNTGIVLVRTDMSPAVAIPAKAEQVRETTMCTALVNDEGIRISTIEHLFAALAGLGIDNAVIEVDAPEIPIMDGSASPFVFLLQSAGIKEQSAPKKYLKIKRPVRVEDGDKWAELKPFKGFRVNFKIDFAHPEIARSQQHVVMDFSTSAFVKDISRARTFGFMRDIEYLRANNLALGGSMENAVVLDEYRVLNPDGLRYEDEFVKHKILDAFGDLYVAGHAILGEFTAYKTGHALNNQLVRALLAQQDAWELVSFEKEADAPVSFTVPGGVVFA.

Residues His-79, His-238, and Asp-242 each contribute to the Zn(2+) site. The active-site Proton donor is His-265.

The protein belongs to the LpxC family. Zn(2+) serves as cofactor.

The enzyme catalyses a UDP-3-O-[(3R)-3-hydroxyacyl]-N-acetyl-alpha-D-glucosamine + H2O = a UDP-3-O-[(3R)-3-hydroxyacyl]-alpha-D-glucosamine + acetate. Its pathway is glycolipid biosynthesis; lipid IV(A) biosynthesis; lipid IV(A) from (3R)-3-hydroxytetradecanoyl-[acyl-carrier-protein] and UDP-N-acetyl-alpha-D-glucosamine: step 2/6. Catalyzes the hydrolysis of UDP-3-O-myristoyl-N-acetylglucosamine to form UDP-3-O-myristoylglucosamine and acetate, the committed step in lipid A biosynthesis. The protein is UDP-3-O-acyl-N-acetylglucosamine deacetylase of Shewanella oneidensis (strain ATCC 700550 / JCM 31522 / CIP 106686 / LMG 19005 / NCIMB 14063 / MR-1).